We begin with the raw amino-acid sequence, 327 residues long: CREB homolog crh-1 (327 aa).

The 60-residue stretch at serine 16–valine 75 folds into the KID domain. Disordered stretches follow at residues glutamine 27–glycine 114 and lysine 151–leucine 200. A compositionally biased stretch (basic and acidic residues) spans glutamate 35–asparagine 44. A Phosphoserine modification is found at serine 48. The segment covering isoleucine 52–glutamate 68 has biased composition (basic and acidic residues). Residues proline 71–serine 84 show a composition bias toward polar residues. The span at glycine 161–proline 172 shows a compositional bias: gly residues. The segment covering glycine 173–serine 199 has biased composition (low complexity). Residues asparagine 266 to glutamate 317 enclose the bZIP domain. A basic motif region spans residues arginine 267 to lysine 292. The stretch at arginine 284–leucine 318 forms a coiled coil. The tract at residues leucine 294 to leucine 315 is leucine-zipper.

The protein belongs to the bZIP family. As to quaternary structure, interacts with CREB-regulated transcription coactivator homolog crtc-1. Post-translationally, transcriptional activity is enhanced by phosphorylation. Phosphorylated by cmk-1. Expressed widely, including in head neurons AFD, gustatory neurons ASE, the olfactory neurons AWC, and in the ASI sensory neurons, as well as in the intestine and gonads in hermaphrodites.

It is found in the nucleus. Transcription factor. Transcriptional activity probably positively regulated by phosphorylation. Modulates expression of target genes, acting by binding to regulatory cAMP response elements (CRE). Acts downstream of the calcium-triggered CaMKK-CaMK1 signaling cascade, consisting of the protein kinase kinase ckk-1 and the protein kinase cmk-1. Plays a role in learning and memory, feeding behavior, stress response, entry into the dauer stage and modulation of lifespan. Involved in commitment to the developmentally arrested larval state known as dauer, acting by positively regulating the expression of dauer-inhibiting TGF-beta-like daf-7 in the ASI neurons. Plays a role in both associative and non-associative long-term memory (LTM). Involved in modulating feeding behavior, acting by regulating transcription of tryptophan hydroxylase tph-1 in serotonergic ADF neurons. Regulates transcription of genes involved in endoplasmic reticulum (ER) stress. Involved in modulation of lifespan, in response to raised temperature, but independently of the heat-shock response pathway, acting by regulating transcription of FMRFamide-like neuropeptides flp-6 in the AFD neuron. Functionally, plays a role in associative long-term memory (LTM) and learning. Its function is as follows. Plays a role in associative long-term memory (LTM) and learning; perhaps required at the time of acquisition and/or the consolidation phase of memory formation. This is CREB homolog crh-1 from Caenorhabditis elegans.